Here is a 325-residue protein sequence, read N- to C-terminus: Mitochondrial thiamine pyrophosphate carrier 1 (325 aa).

3 Solcar repeats span residues 12–111 (GSRL…TTLL), 122–209 (PPSA…LRPH), and 216–312 (PFSS…ALKF). The next 6 helical transmembrane spans lie at 17–35 (VTAA…IAPL), 92–108 (LLYV…YRTT), 127–143 (SFVA…AATY), 184–200 (VWDR…SFFF), 223–239 (VART…TFPL), and 287–304 (GLTV…VTMW).

This sequence belongs to the mitochondrial carrier (TC 2.A.29) family.

The protein resides in the mitochondrion inner membrane. Its function is as follows. Mitochondrial transporter that mediates uptake of thiamine pyrophosphate (ThPP) into mitochondria. This Chaetomium globosum (strain ATCC 6205 / CBS 148.51 / DSM 1962 / NBRC 6347 / NRRL 1970) (Soil fungus) protein is Mitochondrial thiamine pyrophosphate carrier 1 (TPC1).